A 313-amino-acid chain; its full sequence is Peptidyl-prolyl cis-trans isomerase 9 (313 aa).

The PPIase cyclophilin-type domain maps to 9-174 (FLDMALDEKP…AKVRIFNSGE (166 aa)). 2 stretches are compositionally biased toward basic and acidic residues: residues 216 to 230 (EERESDFSSKTESSR) and 253 to 269 (RGDRNRRTQRADRKDDF). Disordered stretches follow at residues 216 to 274 (EERE…IAVR) and 288 to 313 (TPEHWRRNAPSKWQQGSYTHPVDLQP).

It belongs to the cyclophilin-type PPIase family.

The enzyme catalyses [protein]-peptidylproline (omega=180) = [protein]-peptidylproline (omega=0). Functionally, PPIases accelerate the folding of proteins. It catalyzes the cis-trans isomerization of proline imid ic peptide bonds in oligopeptides. Thought to function as a catalyst in the folding and modification of cuticle collagens. This is Peptidyl-prolyl cis-trans isomerase 9 from Caenorhabditis briggsae.